The chain runs to 334 residues: Stabilizer of axonemal microtubules 3 (334 aa).

3 disordered regions span residues 81–105 (AYVPKTHGGPCAQPRAPEPADPTRT), 128–153 (YQSSETRAQYTGSPSGDPRAPEYFGP), and 233–260 (QVWSHGPQRPPCPRSSRPPRPPRVRVPR). The span at 128–141 (YQSSETRAQYTGSP) shows a compositional bias: polar residues. Positions 240-251 (QRPPCPRSSRPP) are enriched in pro residues.

The chain is Stabilizer of axonemal microtubules 3 from Homo sapiens (Human).